A 465-amino-acid chain; its full sequence is MDKSQGVLLSSNVGAGSRPWPELLGSAHWDGLLDPLDLTLRRLILLCGDLCQVTYDSFNSDSHSKYCGTCRFSRSTLLDRTQFPAAGDLSVAAYLYATSDATAFPGSMVYSMSREAWSKESNWIGYVAVSNDAAAAASGQRVIYVAWRGTIRSLEWVDVLKPDLVDHDDILPEGHPGRGRSRVMKGWYLIYSSTDERSPFSKYSARDQMLAAVRELVARYRNESLGVVCTGHSLGASLATLCAFDIVVNGVSKVGDGAHIPVTAVVFGSPQIGNPEFKKQFEEQPNLRALHVRNMPDLIPLYPSGLLGYANVGKTLQVDSKKSPYVKRDTSPGDYHNLQGILHTVAGWNGKDGEFKLQVKRSVALVNKSSGFLKDSNLVPESWWVERNKGMVLGQNGEWQLEGPAEENLPVPPVVTGKIIDDDVAAVATSSSAKEDKKTGKGSKLLSGLIDQLLCVPDTCKAGAA.

Catalysis depends on S233, which acts as the Acyl-ester intermediate. Residues S233, D297, and H336 each act as charge relay system in the active site.

It belongs to the AB hydrolase superfamily. Lipase family.

The protein localises to the cytoplasm. In terms of biological role, acylhydrolase that catalyzes the hydrolysis of phospholipids at the sn-1 position. The chain is Phospholipase A1-II 5 from Oryza sativa subsp. japonica (Rice).